The sequence spans 82 residues: Large ribosomal subunit protein bL27 (82 aa).

Positions 1–20 are disordered; it reads MAHKKGASSSRNGRDSNPQY. Over residues 7–19 the composition is skewed to polar residues; sequence ASSSRNGRDSNPQ.

It belongs to the bacterial ribosomal protein bL27 family.

The protein is Large ribosomal subunit protein bL27 of Bifidobacterium longum (strain NCC 2705).